Here is a 186-residue protein sequence, read N- to C-terminus: Chromosomal replication initiator protein DnaA (186 aa).

Position 1 (Glu1) is a region of interest, domain I, interacts with DnaA modulators. A region of interest (domain II) is located at residue Glu1. The segment at 1–99 (EFFKTFNALI…GALNKVTHTS (99 aa)) is domain III, AAA+ region. The tract at residues 100–186 (LIGRSMTVES…GRNFGGRDHT (87 aa)) is domain IV, binds dsDNA.

The protein belongs to the DnaA family. As to quaternary structure, oligomerizes as a right-handed, spiral filament on DNA at oriC.

The protein localises to the cytoplasm. Its function is as follows. Plays an essential role in the initiation and regulation of chromosomal replication. ATP-DnaA binds to the origin of replication (oriC) to initiate formation of the DNA replication initiation complex once per cell cycle. Binds the DnaA box (a 9 base pair repeat at the origin) and separates the double-stranded (ds)DNA. Forms a right-handed helical filament on oriC DNA; dsDNA binds to the exterior of the filament while single-stranded (ss)DNA is stabiized in the filament's interior. The ATP-DnaA-oriC complex binds and stabilizes one strand of the AT-rich DNA unwinding element (DUE), permitting loading of DNA polymerase. After initiation quickly degrades to an ADP-DnaA complex that is not apt for DNA replication. Binds acidic phospholipids. This is Chromosomal replication initiator protein DnaA from Wolbachia sp.